The following is a 301-amino-acid chain: Mitochondrial carnitine/acylcarnitine carrier protein (301 aa).

Ala-2 bears the N-acetylalanine mark. The Cytoplasmic segment spans residues 2-12; it reads ADEPKPISPFK. Solcar repeat units follow at residues 8–99, 108–196, and 207–293; these read ISPF…GKKL, LSYP…LKNL, and LSVP…AMKF. Residues 13–31 traverse the membrane as a helical segment; the sequence is NLLAGGFGGMCLVFVGHPL. Residues 32–73 lie on the Mitochondrial matrix side of the membrane; the sequence is DTVKVRLQTQPPSLSGQPPMYSGTLDCFRKTLMREGITGLYR. The chain crosses the membrane as a helical span at residues 74 to 93; sequence GMAAPIIGVTPMFAVCFFGF. Residues 94–112 lie on the Cytoplasmic side of the membrane; the sequence is GLGKKLQQKSPEDELSYPQ. Residues 113–131 form a helical membrane-spanning segment; sequence LFTAGMLSGVFTTGIMTPG. At 132–170 the chain is on the mitochondrial matrix side; sequence ERIKCLLQIQASSGENKYSGTLDCAKKLYQEFGIRGFYK. Lys-148 and Lys-157 each carry N6-acetyllysine. Lys-170 bears the N6-acetyllysine; alternate mark. Lys-170 is modified (N6-succinyllysine; alternate). Residues 171–190 traverse the membrane as a helical segment; it reads GTVLTLMRDVPASGMYFMTY. Residues 191-211 are Cytoplasmic-facing; the sequence is EWLKNLFTPEGKSVSDLSVPR. The helical transmembrane segment at 212 to 230 threads the bilayer; it reads ILVAGGFAGIFNWAVAIPP. Residues 231–267 lie on the Mitochondrial matrix side of the membrane; that stretch reads DVLKSRFQTAPPGKYPNGFRDVLRELIREEGVTSLYK. Residues 268–287 traverse the membrane as a helical segment; sequence GFNAVMIRAFPANAACFLGF. Residues 288-301 are Cytoplasmic-facing; that stretch reads EIAMKFLNWIAPNL.

Belongs to the mitochondrial carrier (TC 2.A.29) family. In terms of tissue distribution, widely expressed, with highest levels in the liver, intermediate levels in heart, testis and kidney and low levels in brain, including cortex, cerebellum, hippocampus and hypothalamus.

It localises to the mitochondrion inner membrane. It catalyses the reaction O-acetyl-(R)-carnitine(in) + (R)-carnitine(out) = O-acetyl-(R)-carnitine(out) + (R)-carnitine(in). The enzyme catalyses an O-acyl-(R)-carnitine(in) + (R)-carnitine(out) = an O-acyl-(R)-carnitine(out) + (R)-carnitine(in). It carries out the reaction O-propanoyl-(R)-carnitine(in) + (R)-carnitine(out) = O-propanoyl-(R)-carnitine(out) + (R)-carnitine(in). The catalysed reaction is O-hexadecanoyl-(R)-carnitine(in) + (R)-carnitine(out) = O-hexadecanoyl-(R)-carnitine(out) + (R)-carnitine(in). It catalyses the reaction O-octanoyl-(R)-carnitine(in) + (R)-carnitine(out) = O-octanoyl-(R)-carnitine(out) + (R)-carnitine(in). The enzyme catalyses (R)-carnitine(in) = (R)-carnitine(out). In terms of biological role, mediates the electroneutral exchange of acylcarnitines (O-acyl-(R)-carnitine or L-acylcarnitine) of different acyl chain lengths (ranging from O-acetyl-(R)-carnitine to long-chain O-acyl-(R)-carnitines) with free carnitine ((R)-carnitine or L-carnitine) across the mitochondrial inner membrane, via a ping-pong mechanism. Key player in the mitochondrial oxidation pathway, it translocates the fatty acids in the form of acylcarnitines into the mitochondrial matrix, where the carnitine palmitoyltransferase 2 (CPT-2) activates them to undergo fatty acid beta-oxidation. Catalyzes the unidirectional transport (uniport) of carnitine at lower rates than the antiport (exchange). The polypeptide is Mitochondrial carnitine/acylcarnitine carrier protein (Mus musculus (Mouse)).